Consider the following 207-residue polypeptide: MATTIKLEGEARSEFGKGVARRLRVANKIPATIYAGGEEPAFVTLPMRETTLALRHTNALFTIAFDGNTKMAVVKDVQKNPVKRIIEHIDFLEVKAGEKIDVEVPVFVEGTPKGAAVAFVDIQELKVRADVTNLPEKIVVSVEGLTDGTKVFAKDVVLPEGVELDIEDPEESVVTVEVPEDATESTTAPEAAAAPADAAAAPAADAK.

Positions 171 to 207 (ESVVTVEVPEDATESTTAPEAAAAPADAAAAPAADAK) are disordered. The segment covering 184-207 (ESTTAPEAAAAPADAAAAPAADAK) has biased composition (low complexity).

It belongs to the bacterial ribosomal protein bL25 family. CTC subfamily. In terms of assembly, part of the 50S ribosomal subunit; part of the 5S rRNA/L5/L18/L25 subcomplex. Contacts the 5S rRNA. Binds to the 5S rRNA independently of L5 and L18.

In terms of biological role, this is one of the proteins that binds to the 5S RNA in the ribosome where it forms part of the central protuberance. This chain is Large ribosomal subunit protein bL25, found in Bifidobacterium longum subsp. infantis (strain ATCC 15697 / DSM 20088 / JCM 1222 / NCTC 11817 / S12).